Here is a 407-residue protein sequence, read N- to C-terminus: Phosphopentomutase (407 aa).

Residues Asp10, Asp306, His311, Asp347, His348, and His359 each coordinate Mn(2+).

The protein belongs to the phosphopentomutase family. Mn(2+) is required as a cofactor.

It localises to the cytoplasm. It catalyses the reaction 2-deoxy-alpha-D-ribose 1-phosphate = 2-deoxy-D-ribose 5-phosphate. It carries out the reaction alpha-D-ribose 1-phosphate = D-ribose 5-phosphate. It participates in carbohydrate degradation; 2-deoxy-D-ribose 1-phosphate degradation; D-glyceraldehyde 3-phosphate and acetaldehyde from 2-deoxy-alpha-D-ribose 1-phosphate: step 1/2. In terms of biological role, isomerase that catalyzes the conversion of deoxy-ribose 1-phosphate (dRib-1-P) and ribose 1-phosphate (Rib-1-P) to deoxy-ribose 5-phosphate (dRib-5-P) and ribose 5-phosphate (Rib-5-P), respectively. The chain is Phosphopentomutase from Salmonella gallinarum (strain 287/91 / NCTC 13346).